We begin with the raw amino-acid sequence, 192 residues long: MKEELDAFHQIFTTTKEAIERFMAMLTPVIENAEDDHERLYYHHIYEEEEQRLSRLDVLIPLIEKFQDETDEGLFSPSNNAFNRLLQELNLEKFGLHNFIEHVDLALFSFTDEERQTLLKELRKDAYEGYQYVKEKLAEINARFDHDYADPHAHHDEHRDHLADMPSAGSSHEEVQPVAHKKKGFTVGSLIQ.

His-44, Glu-48, and His-102 together coordinate Fe(3+). A linker region spans residues 143–179; it reads RFDHDYADPHAHHDEHRDHLADMPSAGSSHEEVQPVA. Residues 149-163 show a composition bias toward basic and acidic residues; sequence ADPHAHHDEHRDHLA. The interval 149 to 192 is disordered; that stretch reads ADPHAHHDEHRDHLADMPSAGSSHEEVQPVAHKKKGFTVGSLIQ. Residues 180–192 form a targeting peptide region; it reads HKKKGFTVGSLIQ.

Homodimer, with 2 Fe atoms bound at the subunit interface (without encapsulin), probably also a dimer when encapsulated. 42 electron-dense accretions can be seen inside the nanocompartment which are probably this cargo protein, although perhaps up to one cargo dimer can be bound per shell protein.

The protein resides in the encapsulin nanocompartment. It catalyses the reaction 4 Fe(2+) + O2 + 4 H(+) = 4 Fe(3+) + 2 H2O. Cargo protein of a type 1 encapsulin nanocompartment. A ferritin-like iron-binding protein probably involved in iron mineralization in the encapsulin nanocompartment. Has ferroxidase activity even when encapsulated, the rate is probably controlled by the rate of Fe flux across the nanocompartment pores. Part of the iron-mineralizing encapsulin-associated Firmicute (IMEF) system. 2 different cargo proteins have been identified (IMEF and Fer); when both are expressed in E.coli with the shell protein only IMEF is detected within the nanocompartment. E.coli expressing all 3 genes stores the largest amount of iron and is protected from Fe/H2O2-induced oxidative stress. This Bacillus thermotolerans (Quasibacillus thermotolerans) protein is Ferritin-like protein.